Here is a 158-residue protein sequence, read N- to C-terminus: Cyclic pyranopterin monophosphate synthase (158 aa).

Substrate-binding positions include 75 to 77 (LCH) and 113 to 114 (ME). Residue aspartate 128 is part of the active site.

The protein belongs to the MoaC family. In terms of assembly, homohexamer; trimer of dimers.

The catalysed reaction is (8S)-3',8-cyclo-7,8-dihydroguanosine 5'-triphosphate = cyclic pyranopterin phosphate + diphosphate. It functions in the pathway cofactor biosynthesis; molybdopterin biosynthesis. Functionally, catalyzes the conversion of (8S)-3',8-cyclo-7,8-dihydroguanosine 5'-triphosphate to cyclic pyranopterin monophosphate (cPMP). This chain is Cyclic pyranopterin monophosphate synthase, found in Paraburkholderia phytofirmans (strain DSM 17436 / LMG 22146 / PsJN) (Burkholderia phytofirmans).